The sequence spans 497 residues: Serine/threonine-protein kinase 3 (497 aa).

Position 1 is an N-acetylmethionine (Met1). Positions 1-20 (MEQPPASKSKLKKLSEDSLT) are disordered. Ser15 is subject to Phosphoserine. The 252-residue stretch at 27–278 (FDVLEKLGEG…ATQLLQHPFI (252 aa)) folds into the Protein kinase domain. ATP is bound by residues 33–41 (LGEGSYGSV) and Lys56. Thr117 carries the phosphothreonine; by PKB/AKT1 modification. Asp146 functions as the Proton acceptor in the catalytic mechanism. Positions 151 and 164 each coordinate Mg(2+). At Thr180 the chain carries Phosphothreonine; by autocatalysis. A coiled-coil region spans residues 287 to 328 (LRDLIAEAMEIKAKRHEEQQRELEEEEENSDEDELDSHTMVK). Disordered stretches follow at residues 301 to 343 (RHEE…TSTM) and 368 to 394 (NSEEEEEEEEEEEEDGTMKRNATSPQV). Residues 309–321 (LEEEEENSDEDEL) are compositionally biased toward acidic residues. At Ser316 the chain carries Phosphoserine. The span at 326 to 343 (MVKTSSESVGTMRATSTM) shows a compositional bias: polar residues. Thr336 bears the Phosphothreonine mark. A coiled-coil region spans residues 366-387 (VINSEEEEEEEEEEEEDGTMKR). The span at 369–382 (SEEEEEEEEEEEED) shows a compositional bias: acidic residues. Thr384 bears the Phosphothreonine mark. The residue at position 390 (Thr390) is a Phosphothreonine; by PKB/AKT1. A phosphoserine mark is found at Ser391 and Ser450. An SARAH domain is found at 443–490 (FDFLKNLSLEELQMRLKALDPMMEREIEELHQRYSAKRQPILDAMDAK). Residues 448–479 (NLSLEELQMRLKALDPMMEREIEELHQRYSAK) are a coiled coil.

This sequence belongs to the protein kinase superfamily. STE Ser/Thr protein kinase family. STE20 subfamily. In terms of assembly, homodimer; mediated via the coiled-coil region. Interacts with NORE1, which inhibits autoactivation. Interacts with and stabilizes SAV1. Interacts with RAF1, which prevents dimerization and phosphorylation. Interacts with RASSF1. Interacts (via SARAH domain) with isoform 1 of NEK2. Interacts with ESR1 only in the presence of SAV1. Interacts with PKB/AKT1. Forms a tripartite complex with MOBKL1B and STK38. Interacts with RASSF2 (via SARAH domain). Interacts with DLG5 (via PDZ domain 3). Interacts with LATS1; this interaction is inhibited in the presence of DLG5. Interacts with MARK3 in the presence of DLG5. Interacts with RASSF5; this interaction inhibits STK3 autoactivation through heterodimerization. Interacts (when phosphorylated) with SLMAP (via FHA domain); the interaction associates STK3 with the STRIPAK complex. Mg(2+) serves as cofactor. Autophosphorylated on two residues Thr-174 and Thr-180, leading to activation. Phosphorylation at Thr-117 and Thr-390 by PKB/AKT1, leads to inhibition of its: cleavage, kinase activity, autophosphorylation at Thr-180, binding to RASSF1 and nuclear translocation, and increase in its binding to RAF1. Phosphorylated at Ser-15 by PLK1, leading to activation. In terms of processing, proteolytically cleaved by caspase-3 during apoptosis. Proteolytic cleavage results in kinase activation and nuclear translocation of the truncated form (MST1/N). Post-translationally, ubiquitinated by TRIM69; leading to its redistribution to the perinuclear cytoskeleton.

Its subcellular location is the cytoplasm. The protein localises to the nucleus. It catalyses the reaction L-seryl-[protein] + ATP = O-phospho-L-seryl-[protein] + ADP + H(+). The catalysed reaction is L-threonyl-[protein] + ATP = O-phospho-L-threonyl-[protein] + ADP + H(+). With respect to regulation, inhibited by the C-terminal non-catalytic region. Activated by caspase-cleavage. Full activation also requires homodimerization and autophosphorylation of Thr-180, which are inhibited by the proto-oncogene product RAF1. Activated by RASSF1 which acts by preventing its dephosphorylation. When autophosphorylated at Thr-180, recruits STRIPAK complex and promotes PP2A-mediated dephosphorylation and inactivation of STK3. Its function is as follows. Stress-activated, pro-apoptotic kinase which, following caspase-cleavage, enters the nucleus and induces chromatin condensation followed by internucleosomal DNA fragmentation. Key component of the Hippo signaling pathway which plays a pivotal role in organ size control and tumor suppression by restricting proliferation and promoting apoptosis. The core of this pathway is composed of a kinase cascade wherein STK3/MST2 and STK4/MST1, in complex with its regulatory protein SAV1, phosphorylates and activates LATS1/2 in complex with its regulatory protein MOB1, which in turn phosphorylates and inactivates YAP1 oncoprotein and WWTR1/TAZ. Phosphorylation of YAP1 by LATS2 inhibits its translocation into the nucleus to regulate cellular genes important for cell proliferation, cell death, and cell migration. STK3/MST2 and STK4/MST1 are required to repress proliferation of mature hepatocytes, to prevent activation of facultative adult liver stem cells (oval cells), and to inhibit tumor formation. Phosphorylates NKX2-1. Phosphorylates NEK2 and plays a role in centrosome disjunction by regulating the localization of NEK2 to centrosomes, and its ability to phosphorylate CROCC and CEP250. In conjunction with SAV1, activates the transcriptional activity of ESR1 through the modulation of its phosphorylation. Positively regulates RAF1 activation via suppression of the inhibitory phosphorylation of RAF1 on 'Ser-259'. Phosphorylates MOBKL1A and RASSF2. Phosphorylates MOBKL1B on 'Thr-74'. Acts cooperatively with MOBKL1B to activate STK38. This chain is Serine/threonine-protein kinase 3 (Stk3), found in Mus musculus (Mouse).